The primary structure comprises 137 residues: Small ribosomal subunit protein uS9 (137 aa).

Residues Pro-103–Arg-137 are disordered. Residues Lys-118–Arg-137 are compositionally biased toward basic residues.

It belongs to the universal ribosomal protein uS9 family.

The chain is Small ribosomal subunit protein uS9 from Crocosphaera subtropica (strain ATCC 51142 / BH68) (Cyanothece sp. (strain ATCC 51142)).